Consider the following 426-residue polypeptide: Branched-chain amino acid permease BrnQ (426 aa).

Helical transmembrane passes span 11-31 (LMLFSMFFGAGNLIFPPMLGL), 41-61 (ILGFLATSVLLPVLAIIAVVL), 76-96 (IFGLVFPIAAYLSIGAFYALP), 111-131 (NALYSGLFNFVFFAVALALSW), 140-160 (LGKWLTPALLTLIVVLVVLSV), 186-206 (GYMTMDAIAALAFGIVVISAF), 219-239 (VVSAFIAGILLALVYLGLGSI), 268-288 (IMFVAILILACMTTAVGLISA), 296-316 (LLPGVKYHVWATVFALISFGV), 324-344 (VLAVAAPVISFIYPSAITLVF), 358-378 (TYLFGIWTAVVWALFMSIPAL), and 390-410 (MSLGWVVPVLVASAIGLAIDW).

It belongs to the branched chain amino acid transporter family.

It is found in the cell membrane. In terms of biological role, branched chain amino acid transport system, which transports isoleucine. This is Branched-chain amino acid permease BrnQ from Corynebacterium glutamicum (strain ATCC 13032 / DSM 20300 / JCM 1318 / BCRC 11384 / CCUG 27702 / LMG 3730 / NBRC 12168 / NCIMB 10025 / NRRL B-2784 / 534).